A 311-amino-acid polypeptide reads, in one-letter code: 4-hydroxy-3-methylbut-2-enyl diphosphate reductase (311 aa).

Cys-14 serves as a coordination point for [4Fe-4S] cluster. 2 residues coordinate (2E)-4-hydroxy-3-methylbut-2-enyl diphosphate: His-43 and His-76. Dimethylallyl diphosphate-binding residues include His-43 and His-76. Residues His-43 and His-76 each coordinate isopentenyl diphosphate. Cys-98 serves as a coordination point for [4Fe-4S] cluster. His-126 is a (2E)-4-hydroxy-3-methylbut-2-enyl diphosphate binding site. His-126 serves as a coordination point for dimethylallyl diphosphate. Residue His-126 coordinates isopentenyl diphosphate. Glu-128 (proton donor) is an active-site residue. Thr-166 contacts (2E)-4-hydroxy-3-methylbut-2-enyl diphosphate. Cys-196 contacts [4Fe-4S] cluster. Ser-224, Ser-225, Asn-226, and Ser-268 together coordinate (2E)-4-hydroxy-3-methylbut-2-enyl diphosphate. Dimethylallyl diphosphate contacts are provided by Ser-224, Ser-225, Asn-226, and Ser-268. The isopentenyl diphosphate site is built by Ser-224, Ser-225, Asn-226, and Ser-268.

The protein belongs to the IspH family. It depends on [4Fe-4S] cluster as a cofactor.

It carries out the reaction isopentenyl diphosphate + 2 oxidized [2Fe-2S]-[ferredoxin] + H2O = (2E)-4-hydroxy-3-methylbut-2-enyl diphosphate + 2 reduced [2Fe-2S]-[ferredoxin] + 2 H(+). The enzyme catalyses dimethylallyl diphosphate + 2 oxidized [2Fe-2S]-[ferredoxin] + H2O = (2E)-4-hydroxy-3-methylbut-2-enyl diphosphate + 2 reduced [2Fe-2S]-[ferredoxin] + 2 H(+). It participates in isoprenoid biosynthesis; dimethylallyl diphosphate biosynthesis; dimethylallyl diphosphate from (2E)-4-hydroxy-3-methylbutenyl diphosphate: step 1/1. The protein operates within isoprenoid biosynthesis; isopentenyl diphosphate biosynthesis via DXP pathway; isopentenyl diphosphate from 1-deoxy-D-xylulose 5-phosphate: step 6/6. Its function is as follows. Catalyzes the conversion of 1-hydroxy-2-methyl-2-(E)-butenyl 4-diphosphate (HMBPP) into a mixture of isopentenyl diphosphate (IPP) and dimethylallyl diphosphate (DMAPP). Acts in the terminal step of the DOXP/MEP pathway for isoprenoid precursor biosynthesis. The polypeptide is 4-hydroxy-3-methylbut-2-enyl diphosphate reductase (Chromobacterium violaceum (strain ATCC 12472 / DSM 30191 / JCM 1249 / CCUG 213 / NBRC 12614 / NCIMB 9131 / NCTC 9757 / MK)).